A 1325-amino-acid chain; its full sequence is NHS-like protein 3 (1325 aa).

A coiled-coil region spans residues 53–85 (LEDLHTEAQEGLKILQQEEEDTSSKERNESLEN). Disordered regions lie at residues 68-92 (QQEEEDTSSKERNESLENDSTSGHS), 111-131 (QGSTFKPLNPVKRLDKSKRRS), 291-348 (CSAS…KGKC), 368-570 (MSVS…AKTS), 595-614 (QTNTTSSEPLKFSPPLTTVK), 829-891 (EVNG…MEES), 935-981 (LLST…VSEF), 1084-1138 (VGED…SSAV), 1243-1272 (GTKKPIKVPPPVAKKPVHGSNPPNKMENAT), and 1293-1313 (SDQVHPAGQRAQSLGNQEQAS). The span at 296–334 (ASKGSMASASPSSSRSGSGTNQAPPTTSPSRSNSQSSET) shows a compositional bias: low complexity. Residues 335 to 344 (IVSNSSTISS) are compositionally biased toward polar residues. Over residues 369-378 (SVSSSSSWKS) the composition is skewed to low complexity. Residues 400-412 (VRNSHSFSRSLSV) show a composition bias toward polar residues. Over residues 428–447 (LHHENMQRQREQGDIQDPKD) the composition is skewed to basic and acidic residues. Residues 450–460 (PNNNEQTNRDI) are compositionally biased toward polar residues. Positions 515–524 (KTRECGENFD) are enriched in basic and acidic residues. A compositionally biased stretch (low complexity) spans 528–541 (SPSSGYSSQSGTPT). Pro residues predominate over residues 834 to 850 (SPPPSPPPEHHPPPPPI). Polar residues-rich tracts occupy residues 935 to 948 (LLSTNVSDMDSSPE) and 1088 to 1100 (QVNNDSKPSTEPT). A compositionally biased stretch (low complexity) spans 1124 to 1138 (KSNSPAKSSSASSAV). Residues 1302–1311 (RAQSLGNQEQ) show a composition bias toward polar residues.

Its function is as follows. Able to directly activate the TNF-NFkappaB signaling pathway. In Danio rerio (Zebrafish), this protein is NHS-like protein 3 (nhsl3).